Here is a 475-residue protein sequence, read N- to C-terminus: UDP-glycosyltransferase 84A4 (475 aa).

The Proton acceptor role is filled by His20. His20 lines the an anthocyanidin pocket. UDP-alpha-D-glucose is bound by residues Gln342, His357, Trp360, Asn361, Ser362, and Glu365. Gly380 contributes to the an anthocyanidin binding site. The UDP-alpha-D-glucose site is built by Asp381 and Gln382.

Belongs to the UDP-glycosyltransferase family.

It carries out the reaction (E)-4-coumarate + UDP-alpha-D-glucose = 4-O-(beta-D-glucosyl)-trans-4-coumarate + UDP + H(+). It catalyses the reaction (E)-ferulate + UDP-alpha-D-glucose = 1-O-[(E)-feruloyl]-beta-D-glucose + UDP. The enzyme catalyses (E)-caffeate + UDP-alpha-D-glucose = 1-O-[(E)-caffeoyl]-beta-D-glucose + UDP. The catalysed reaction is (E)-sinapate + UDP-alpha-D-glucose = 1-O-(trans-sinapoyl)-beta-D-glucose + UDP. It carries out the reaction (E)-cinnamate + UDP-alpha-D-glucose = 1-O-(trans-cinnamoyl)-beta-D-glucose + UDP. In terms of biological role, UDP-glucosyltransferase that forms glucose esters with phenylpropanoids. Glucosylates 4-coumarate, ferulate, caffeate, sinapate and cinnamate. The sequence is that of UDP-glycosyltransferase 84A4 from Arabidopsis thaliana (Mouse-ear cress).